Reading from the N-terminus, the 220-residue chain is Charged multivesicular body protein 2a (220 aa).

A coiled-coil region spans residues 12 to 53 (EEMLRQNQRALNRAMRDLDRERQRLEQQEKKIIADIKKMAKQ). Positions 184–220 (ATGGSLSVAAGKKAEPQPTLADADADLEERLNNLRRD) are disordered. The short motif at 208 to 218 (ADLEERLNNLR) is the MIT-interacting motif element. The span at 211 to 220 (EERLNNLRRD) shows a compositional bias: basic and acidic residues.

Belongs to the SNF7 family. As to quaternary structure, probable core component of the endosomal sorting required for transport complex III (ESCRT-III). ESCRT-III components are thought to multimerize to form a flat lattice on the perimeter membrane of the endosome.

The protein resides in the late endosome membrane. It is found in the cytoplasm. In terms of biological role, probable core component of the endosomal sorting required for transport complex III (ESCRT-III) which is involved in multivesicular bodies (MVBs) formation and sorting of endosomal cargo proteins into MVBs. MVBs contain intraluminal vesicles (ILVs) that are generated by invagination and scission from the limiting membrane of the endosome and mostly are delivered to lysosomes enabling degradation of membrane proteins, such as stimulated growth factor receptors, lysosomal enzymes and lipids. This chain is Charged multivesicular body protein 2a (chmp2a), found in Danio rerio (Zebrafish).